A 185-amino-acid polypeptide reads, in one-letter code: UPF0149 protein PFL_5969 (185 aa).

The protein belongs to the UPF0149 family.

The sequence is that of UPF0149 protein PFL_5969 from Pseudomonas fluorescens (strain ATCC BAA-477 / NRRL B-23932 / Pf-5).